The primary structure comprises 212 residues: Uracil phosphoribosyltransferase (212 aa).

5-phospho-alpha-D-ribose 1-diphosphate-binding positions include Arg78, Arg103, and 130–138 (DPMLATGGS). Uracil contacts are provided by residues Ile193 and 198 to 200 (GDA). Position 199 (Asp199) interacts with 5-phospho-alpha-D-ribose 1-diphosphate.

This sequence belongs to the UPRTase family. Mg(2+) serves as cofactor.

It catalyses the reaction UMP + diphosphate = 5-phospho-alpha-D-ribose 1-diphosphate + uracil. It participates in pyrimidine metabolism; UMP biosynthesis via salvage pathway; UMP from uracil: step 1/1. Allosterically activated by GTP. Catalyzes the conversion of uracil and 5-phospho-alpha-D-ribose 1-diphosphate (PRPP) to UMP and diphosphate. The polypeptide is Uracil phosphoribosyltransferase (Azotobacter vinelandii (strain DJ / ATCC BAA-1303)).